Reading from the N-terminus, the 967-residue chain is Probable helicase DDB_G0274399 (967 aa).

A disordered region spans residues 161 to 192; sequence EMTDDEDTAPTSAATHVGAPTKSTTTTTTTTT. Position 357-364 (357-364) interacts with ATP; that stretch reads GPPGTGKT. Disordered stretches follow at residues 529–553 and 892–967; these read SAIP…QDTS and QKQK…RTRR. Residues 890-949 adopt a coiled-coil conformation; that stretch reads NLQKQKDIEKRKKQHKRQKQKSKENDKKKQLKKRKELNNNDNNNNNKESSNKEVQEITNA. Over residues 900–909 the composition is skewed to basic residues; sequence RKKQHKRQKQ. The span at 928 to 937 shows a compositional bias: low complexity; it reads NNDNNNNNKE.

This sequence belongs to the DNA2/NAM7 helicase family.

Its subcellular location is the nucleus. This Dictyostelium discoideum (Social amoeba) protein is Probable helicase DDB_G0274399.